The primary structure comprises 301 residues: ATP synthase gamma chain (301 aa).

This sequence belongs to the ATPase gamma chain family. F-type ATPases have 2 components, CF(1) - the catalytic core - and CF(0) - the membrane proton channel. CF(1) has five subunits: alpha(3), beta(3), gamma(1), delta(1), epsilon(1). CF(0) has three main subunits: a, b and c.

The protein localises to the cell inner membrane. Produces ATP from ADP in the presence of a proton gradient across the membrane. The gamma chain is believed to be important in regulating ATPase activity and the flow of protons through the CF(0) complex. The chain is ATP synthase gamma chain from Bordetella petrii (strain ATCC BAA-461 / DSM 12804 / CCUG 43448).